The following is an 896-amino-acid chain: Protein translocase subunit SecA (896 aa).

ATP contacts are provided by residues Gln-87, 105–109 (GEGKT), and Asp-512. Disordered stretches follow at residues 565-584 (RRID…PGSS) and 840-896 (EAAQ…AHEA). Positions 876, 878, 887, and 888 each coordinate Zn(2+). A compositionally biased stretch (basic residues) spans 882–896 (KKYKHCHGNRAAHEA).

The protein belongs to the SecA family. As to quaternary structure, monomer and homodimer. Part of the essential Sec protein translocation apparatus which comprises SecA, SecYEG and auxiliary proteins SecDF-YajC and YidC. Zn(2+) is required as a cofactor.

It is found in the cell inner membrane. It localises to the cytoplasm. It carries out the reaction ATP + H2O + cellular proteinSide 1 = ADP + phosphate + cellular proteinSide 2.. Part of the Sec protein translocase complex. Interacts with the SecYEG preprotein conducting channel. Has a central role in coupling the hydrolysis of ATP to the transfer of proteins into and across the cell membrane, serving both as a receptor for the preprotein-SecB complex and as an ATP-driven molecular motor driving the stepwise translocation of polypeptide chains across the membrane. In Mannheimia succiniciproducens (strain KCTC 0769BP / MBEL55E), this protein is Protein translocase subunit SecA.